The chain runs to 69 residues: Brevinin-1Pb (69 aa).

The signal sequence occupies residues 1-20 (MFTLNKFLLLLFFLGTINLS). Residues 21 to 43 (FCEEENAEEERIDEPDETDVEVE) constitute a propeptide that is removed on maturation. Cysteine 63 and cysteine 69 are oxidised to a cystine.

Expressed by the skin glands.

The protein localises to the secreted. Antibacterial activity against Gram-positive bacterium S.aureus and Gram-negative bacterium E.coli. Has activity against C.albicans. In Lithobates pipiens (Northern leopard frog), this protein is Brevinin-1Pb.